We begin with the raw amino-acid sequence, 445 residues long: MGKNILFFSFVGVMVLVLVACGGSSSSSSDADETSVIGDDIEGATELIFWTFAGQHVDLFEDAVVSWNEEFPDRPIKLVAETYPFDQMHNNLLLALQSGSGAPDLADIEVSRFPNFLQGVPQLLPMNDHVEPVIDKFVEARFNLYAKDGEYYGIPTHVGASVMYYNKEIMDEAGVDIESIETWDDYVEAGKQVVERTGKVMTTVPTDDYLPMFQMVSQRGSDFFDENGNLTLDTQENIEVLQFLYDLIYVHEIAELTPGGQPHAEEYYQYMNDGNVASMAMPIWYMGRFLDNMPDLAGKMLIQPLPAWEEGGFRSAGMGGTGTVVTNQTDHEELAKDFLAYAKISEKANEKLWTILGFDPPRWDVWDNPVFQEDNDFYQFFGENIFEVLLDVRDEINSINISQYTPSVANEFSTNIFNDVLRQQTHTPEEALKKAQETIEANMQQ.

Residues 1-20 form the signal peptide; it reads MGKNILFFSFVGVMVLVLVA. Cysteine 21 carries N-palmitoyl cysteine lipidation. Residue cysteine 21 is the site of S-diacylglycerol cysteine attachment.

The protein belongs to the bacterial solute-binding protein 1 family. In terms of assembly, the complex is composed of two ATP-binding proteins (MsmX), two transmembrane proteins (AraP and AraQ) and a solute-binding protein (AraN).

It localises to the cell membrane. Part of the ABC transporter complex AraNPQ involved in the uptake of arabinooligosaccharides. AraN captures the substrate and delivers it to the two transmembrane components. The protein is Arabinooligosaccharide-binding protein (araN) of Halalkalibacterium halodurans (strain ATCC BAA-125 / DSM 18197 / FERM 7344 / JCM 9153 / C-125) (Bacillus halodurans).